A 305-amino-acid chain; its full sequence is Foldase protein PrsA (305 aa).

The N-terminal stretch at M1–G19 is a signal peptide. Residue C20 is the site of N-palmitoyl cysteine attachment. Residue C20 is the site of S-diacylglycerol cysteine attachment. Residues E136–K235 enclose the PpiC domain.

Belongs to the PrsA family.

The protein localises to the cell membrane. The catalysed reaction is [protein]-peptidylproline (omega=180) = [protein]-peptidylproline (omega=0). Its function is as follows. Plays a major role in protein secretion by helping the post-translocational extracellular folding of several secreted proteins. This Levilactobacillus brevis (strain ATCC 367 / BCRC 12310 / CIP 105137 / JCM 1170 / LMG 11437 / NCIMB 947 / NCTC 947) (Lactobacillus brevis) protein is Foldase protein PrsA.